We begin with the raw amino-acid sequence, 3623 residues long: Cubilin (3623 aa).

The first 20 residues, 1–20 (MSSQFLWGFVTLLMIAELDG), serve as a signal peptide directing secretion. Residues 21–32 (KTGKPEQRGQKR) constitute a propeptide, removed in mature form. The tract at residues 39–46 (PRMTTEEG) is interaction with AMN. N95 carries an N-linked (GlcNAc...) asparagine glycan. In terms of domain architecture, EGF-like 1 spans 129-165 (ERKVCSSNPCLNGGTCVNLHDSFVCICPSQWKGLFCS). 9 disulfides stabilise this stretch: C133/C144, C138/C153, C155/C164, C171/C187, C181/C196, C198/C207, C264/C277, C271/C286, and C289/C300. The EGF-like 2; calcium-binding domain occupies 167 to 208 (DVNECVVYSGTPFGCQSGSTCVNTVGSFRCDCTPDTYGPQCA). The EGF-like 3; calcium-binding domain occupies 260 to 301 (DKDECSLQPSPCSEHAQCFNTQGSFYCGACPKGWQGNGYECQ). Positions 302-345 (DINECEINNGGCSQAPLVPCLNTPGSFSCGNCPAGFSGDGRVCT) constitute an EGF-like 4; calcium-binding domain. EGF-like domains are found at residues 346 to 385 (PVDI…YTGN) and 395 to 430 (LSNI…QNCT). Cystine bridges form between C350/C363, C357/C376, C399/C409, C404/C418, C420/C429, C436/C447, C441/C456, C458/C467, C474/C500, C527/C549, C590/C616, C643/C665, and C708/C734. N-linked (GlcNAc...) asparagine glycosylation is present at N428. The 37-residue stretch at 432–468 (NINDCSSNPCLNGGTCIDGINGFTCDCTSSWTGYYCQ) folds into the EGF-like 7; calcium-binding domain. 27 consecutive CUB domains span residues 474-586 (CGGI…WEAK), 590-702 (CGGI…YLTT), 708-816 (CGGN…YQVA), 817-928 (CGGM…FSSD), 932-1042 (CGEV…YEAI), 1048-1161 (CLYD…WDGS), 1165-1277 (CGGN…FRQR), 1278-1389 (CDNV…WFTH), 1391-1506 (CGGE…WRAV), 1510-1619 (CGGI…FREE), 1620-1734 (CGGR…YSAS), 1738-1850 (CGGS…FKNI), 1852-1963 (GNNN…WFAV), 1978-2091 (CGGF…FHKS), 2092-2213 (CGGY…YEAK), 2217-2334 (CGGT…YSIA), 2336-2448 (CGGT…FKSS), 2452-2565 (CGGD…YTST), 2570-2687 (CGGF…YSFT), 2689-2801 (CGGI…WTTN), 2805-2919 (CGGT…FISR), 2920-3035 (CGRT…YRAI), 3037-3150 (CGGI…FRET), 3157-3274 (CGGY…YTFV), 3278-3393 (CGGT…YQIA), 3395-3507 (CNRE…WTSS), and 3511-3623 (CGGT…MWSS). An N-linked (GlcNAc...) asparagine glycan is attached at N491. N-linked (GlcNAc...) asparagine glycosylation is found at N711 and N749. The cysteines at positions 761 and 779 are disulfide-linked. N781 carries N-linked (GlcNAc...) asparagine glycosylation. C817 and C842 are joined by a disulfide. N-linked (GlcNAc...) asparagine glycosylation is present at N857. Cystine bridges form between C869-C891 and C932-C958. N957 carries N-linked (GlcNAc...) asparagine glycosylation. Residue E980 coordinates Ca(2+). Residue N984 is glycosylated (N-linked (GlcNAc...) asparagine). An intrachain disulfide couples C985 to C1005. Residues D988, D1027, and L1030 each coordinate Ca(2+). C1048 and C1074 are oxidised to a cystine. Residues E1096, D1105, and D1146 each coordinate Ca(2+). C1165 and C1191 are disulfide-bonded. N-linked (GlcNAc...) asparagine glycosylation is present at N1168. 5 residues coordinate Ca(2+): E1213, D1221, D1262, G1264, and Q1265. C1218 and C1240 are joined by a disulfide. C1278 and C1306 form a disulfide bridge. N-linked (GlcNAc...) asparagine glycans are attached at residues N1285, N1307, and N1319. E1328 is a binding site for Ca(2+). N1332 carries an N-linked (GlcNAc...) asparagine glycan. A disulfide bridge links C1333 with C1351. Ca(2+) is bound by residues D1336, D1373, and I1375. Disulfide bonds link C1391–C1417 and C1444–C1466. Residue N1500 is glycosylated (N-linked (GlcNAc...) asparagine). A disulfide bond links C1510 and C1536. N1551, N1646, and N1671 each carry an N-linked (GlcNAc...) asparagine glycan. C1620 and C1647 are disulfide-bonded. 3 cysteine pairs are disulfide-bonded: C1675/C1697, C1738/C1764, and C1791/C1812. 2 N-linked (GlcNAc...) asparagine glycosylation sites follow: N1802 and N1819. 3 disulfides stabilise this stretch: C1905-C1927, C1978-C2006, and C2032-C2054. 2 N-linked (GlcNAc...) asparagine glycosylation sites follow: N2085 and N2117. Intrachain disulfides connect C2092/C2118 and C2217/C2247. N-linked (GlcNAc...) asparagine glycosylation occurs at N2274. Cystine bridges form between C2275/C2297, C2336/C2363, C2390/C2411, C2452/C2478, and C2505/C2527. N2400 carries an N-linked (GlcNAc...) asparagine glycan. 3 N-linked (GlcNAc...) asparagine glycosylation sites follow: N2531, N2581, and N2610. C2570 and C2599 are oxidised to a cystine. Disulfide bonds link C2628-C2649, C2689-C2715, C2742-C2764, C2805-C2831, C2860-C2883, C2920-C2946, and C2977-C2999. Residues N2813, N2875, N2945, and N2989 are each glycosylated (N-linked (GlcNAc...) asparagine). The residue at position 3008 (T3008) is a Phosphothreonine. Disulfide bonds link C3037-C3064 and C3091-C3113. N-linked (GlcNAc...) asparagine glycosylation is found at N3042, N3106, N3125, and N3165. 2 cysteine pairs are disulfide-bonded: C3157-C3185 and C3215-C3237. 3 N-linked (GlcNAc...) asparagine glycosylation sites follow: N3268, N3283, and N3290. 2 cysteine pairs are disulfide-bonded: C3278/C3306 and C3332/C3354. 3 N-linked (GlcNAc...) asparagine glycosylation sites follow: N3357, N3400, and N3430. The cysteines at positions 3395 and 3421 are disulfide-linked. 3 cysteine pairs are disulfide-bonded: C3448-C3470, C3511-C3537, and C3564-C3586. The N-linked (GlcNAc...) asparagine glycan is linked to N3533.

Interacts with AMN. Component of the cubam complex composed of one CUBN trimer and one AMN chain. The cubam complex can dimerize. Interacts with LRP2 in a dual-receptor complex in a calcium-dependent manner. Found in a complex with PID1/PCLI1, LRP1 and CUBNI. Interacts with LRP1 and PID1/PCLI1. The precursor is cleaved by a trans-Golgi proteinase furin, removing a propeptide. Post-translationally, N-glycosylated. In terms of tissue distribution, expressed to intestinal, renal and yalk sac apical membranes. In kidney, expressed in the proximal tubule.

It is found in the cell membrane. The protein resides in the endosome membrane. The protein localises to the lysosome membrane. Functionally, endocytic receptor which plays a role in lipoprotein, vitamin and iron metabolism by facilitating their uptake. Acts together with LRP2 to mediate endocytosis of high-density lipoproteins, GC, hemoglobin, ALB, TF and SCGB1A1. Acts together with AMN to mediate endocytosis of the CBLIF-cobalamin complex. Binds to ALB, MB, Kappa and lambda-light chains, TF, hemoglobin, GC, SCGB1A1, APOA1, high density lipoprotein, and the CBLIF-cobalamin complex. Ligand binding requires calcium. Serves as important transporter in several absorptive epithelia, including intestine, renal proximal tubules and embryonic yolk sac. May play an important role in the development of the peri-implantation embryo through internalization of APOA1 and cholesterol. Binds to LGALS3 at the maternal-fetal interface. The sequence is that of Cubilin (Cubn) from Rattus norvegicus (Rat).